A 213-amino-acid polypeptide reads, in one-letter code: Putative manganese efflux pump MntP (213 aa).

A run of 6 helical transmembrane segments spans residues 3–23 (ILSIVLTGFGLAMDAFAVSVA), 36–56 (ALKVALFFGGFQALMPLIGWG), 67–87 (AFDHWIAFILLGFIGGKMIFE), 130–150 (LAIATSIDALAVGVSFAFLGI), 152–172 (IVQTIIIIGIITFVLCFLGVI), and 187–207 (IVGGVILILIGINILLEHTGI).

This sequence belongs to the MntP (TC 9.B.29) family.

The protein resides in the cell membrane. Probably functions as a manganese efflux pump. In Clostridium perfringens (strain ATCC 13124 / DSM 756 / JCM 1290 / NCIMB 6125 / NCTC 8237 / Type A), this protein is Putative manganese efflux pump MntP.